The primary structure comprises 470 residues: Glutamyl-tRNA(Gln) amidotransferase subunit A (470 aa).

Residues Lys71 and Ser146 each act as charge relay system in the active site. Catalysis depends on Ser170, which acts as the Acyl-ester intermediate.

This sequence belongs to the amidase family. GatA subfamily. Heterotrimer of A, B and C subunits.

The enzyme catalyses L-glutamyl-tRNA(Gln) + L-glutamine + ATP + H2O = L-glutaminyl-tRNA(Gln) + L-glutamate + ADP + phosphate + H(+). In terms of biological role, allows the formation of correctly charged Gln-tRNA(Gln) through the transamidation of misacylated Glu-tRNA(Gln) in organisms which lack glutaminyl-tRNA synthetase. The reaction takes place in the presence of glutamine and ATP through an activated gamma-phospho-Glu-tRNA(Gln). The sequence is that of Glutamyl-tRNA(Gln) amidotransferase subunit A from Akkermansia muciniphila (strain ATCC BAA-835 / DSM 22959 / JCM 33894 / BCRC 81048 / CCUG 64013 / CIP 107961 / Muc).